Here is a 348-residue protein sequence, read N- to C-terminus: Isopentenyl-diphosphate delta-isomerase (348 aa).

A substrate-binding site is contributed by 9-10; that stretch reads RK. Residues 68–70, Ser-98, and Asn-127 contribute to the FMN site; that span reads AMT. A substrate-binding site is contributed by Gln-157. Glu-158 is a binding site for Mg(2+). FMN contacts are provided by residues Lys-188, Ser-213, Thr-218, and 286 to 287; that span reads AG.

It belongs to the IPP isomerase type 2 family. In terms of assembly, homooctamer. Dimer of tetramers. Requires FMN as cofactor. NADPH serves as cofactor. It depends on Mg(2+) as a cofactor.

Its subcellular location is the cytoplasm. It carries out the reaction isopentenyl diphosphate = dimethylallyl diphosphate. Involved in the biosynthesis of isoprenoids. Catalyzes the 1,3-allylic rearrangement of the homoallylic substrate isopentenyl (IPP) to its allylic isomer, dimethylallyl diphosphate (DMAPP). The chain is Isopentenyl-diphosphate delta-isomerase from Limosilactobacillus reuteri subsp. reuteri (strain JCM 1112) (Lactobacillus reuteri).